The sequence spans 348 residues: uncharacterized protein (348 aa).

The segment at 132–348 (SECRRSSDAL…QGTRRDSARL (217 aa)) is disordered. The span at 161–178 (STAPIPNAAISSARSSAR) shows a compositional bias: low complexity. Residues 192–207 (SRSSSETRSPGGTVQP) show a composition bias toward polar residues. The segment covering 227–273 (AAGSLLPAPRPPASSASSPQAAAPAAPSATRLPRRTTPSAPRPSSRP) has biased composition (low complexity). A compositionally biased stretch (pro residues) spans 274–287 (ARPPIPAARPPPRR). Low complexity predominate over residues 288-310 (TPGTPRPAAARARAPAGCSPARR).

This is an uncharacterized protein from Streptomyces fradiae (Streptomyces roseoflavus).